A 196-amino-acid polypeptide reads, in one-letter code: MARSAYSYIRDAWKNPGDGQLAELQWQRQQEWRNEGAVERIERPTRLDKARSQGYKAKQGVIVARVSVRKGSARKRRHKAGRRSKRQGVTRITRRKDIQRVAEERASRTFPNLRVLNSYSVGQDGRQKWHEVILIDPNHPAIQNDDDLSWICADDQADRVFRGLTGAGRRNRGLSGKGKGSEKTRPSLRSNGGKGK.

Disordered regions lie at residues 72 to 93 (SARK…TRIT) and 163 to 196 (GLTG…GKGK).

It belongs to the eukaryotic ribosomal protein eL15 family. As to quaternary structure, part of the 50S ribosomal subunit. Interacts with protein L7Ae and weakly with L44e.

This chain is Large ribosomal subunit protein eL15 (rpl15e), found in Haloarcula marismortui (strain ATCC 43049 / DSM 3752 / JCM 8966 / VKM B-1809) (Halobacterium marismortui).